The primary structure comprises 130 residues: MAPKAEKKPASKAPAEKKPAAKKTASATGTKKRSKTRKETYSSYIYKVLKQTHPDTGISQKAMSIMNSFVNDIFERIAGEASKLAAYNKKSTISAREIQTAVRLILPGELAKHAVSEGTRAVTKYSSAAN.

Over residues 1–19 the composition is skewed to basic and acidic residues; the sequence is MAPKAEKKPASKAPAEKKP. The tract at residues 1–39 is disordered; it reads MAPKAEKKPASKAPAEKKPAAKKTASATGTKKRSKTRKE. 2 positions are modified to N6-acetyllysine; alternate: Lys7 and Lys8. Glycyl lysine isopeptide (Lys-Gly) (interchain with G-Cter in SUMO); alternate cross-links involve residues Lys7 and Lys8. Residue Ser11 is modified to Phosphoserine. Lys12 carries the post-translational modification N6-acetyllysine. Position 17 is an N6-acetyllysine; alternate (Lys17). Residue Lys17 forms a Glycyl lysine isopeptide (Lys-Gly) (interchain with G-Cter in SUMO); alternate linkage. Residue Lys18 forms a Glycyl lysine isopeptide (Lys-Gly) (interchain with G-Cter in SUMO) linkage. Lys124 participates in a covalent cross-link: Glycyl lysine isopeptide (Lys-Gly) (interchain with G-Cter in ubiquitin).

This sequence belongs to the histone H2B family. The nucleosome is a histone octamer containing two molecules each of H2A, H2B, H3 and H4 assembled in one H3-H4 heterotetramer and two H2A-H2B heterodimers. The octamer wraps approximately 147 bp of DNA. Post-translationally, monoubiquitinated by the UBC2-BRE1 complex to form H2BK123ub1. H2BK123ub1 gives a specific tag for epigenetic transcriptional activation and is also prerequisite for H3K4me and H3K79me formation. H2BK123ub1 also modulates the formation of double-strand breaks during meiosis and is a prerequisite for DNA-damage checkpoint activation. In terms of processing, phosphorylated by STE20 to form H2BS10ph during progression through meiotic prophase. May be correlated with chromosome condensation. Acetylated by GCN5 to form H2BK11ac and H2BK16ac. H2BK16ac can also be formed by ESA1. Acetylation of N-terminal lysines and particularly formation of H2BK11acK16ac has a positive effect on transcription. Post-translationally, sumoylation to form H2BK6su or H2BK7su, and probably also H2BK16su or H2BK17su, occurs preferentially near the telomeres and represses gene transcription.

Its subcellular location is the nucleus. The protein resides in the chromosome. Its function is as follows. Core component of nucleosome. Nucleosomes wrap and compact DNA into chromatin, limiting DNA accessibility to the cellular machineries which require DNA as a template. Histones thereby play a central role in transcription regulation, DNA repair, DNA replication and chromosomal stability. DNA accessibility is regulated via a complex set of post-translational modifications of histones, also called histone code, and nucleosome remodeling. This chain is Histone H2B.1 (HTB1), found in Debaryomyces hansenii (strain ATCC 36239 / CBS 767 / BCRC 21394 / JCM 1990 / NBRC 0083 / IGC 2968) (Yeast).